A 288-amino-acid chain; its full sequence is Serine/threonine-protein kinase pef1 (288 aa).

The region spanning 3–285 (YQRLEKLGEG…GQDALQHAWF (283 aa)) is the Protein kinase domain. ATP-binding positions include 9–17 (LGEGTYAHV) and K32. T13 carries the post-translational modification Phosphothreonine. Position 14 is a phosphotyrosine (Y14). The Proton acceptor role is filled by D126.

The protein belongs to the protein kinase superfamily. CMGC Ser/Thr protein kinase family. CDC2/CDKX subfamily. In terms of assembly, interacts with the pas1 cyclin.

It carries out the reaction L-seryl-[protein] + ATP = O-phospho-L-seryl-[protein] + ADP + H(+). The enzyme catalyses L-threonyl-[protein] + ATP = O-phospho-L-threonyl-[protein] + ADP + H(+). The chain is Serine/threonine-protein kinase pef1 (pef1) from Schizosaccharomyces pombe (strain 972 / ATCC 24843) (Fission yeast).